The primary structure comprises 416 residues: Tryptophan synthase beta chain (416 aa).

Lysine 109 bears the N6-(pyridoxal phosphate)lysine mark.

It belongs to the TrpB family. In terms of assembly, tetramer of two alpha and two beta chains. Pyridoxal 5'-phosphate is required as a cofactor.

It catalyses the reaction (1S,2R)-1-C-(indol-3-yl)glycerol 3-phosphate + L-serine = D-glyceraldehyde 3-phosphate + L-tryptophan + H2O. Its pathway is amino-acid biosynthesis; L-tryptophan biosynthesis; L-tryptophan from chorismate: step 5/5. The beta subunit is responsible for the synthesis of L-tryptophan from indole and L-serine. The polypeptide is Tryptophan synthase beta chain (Prochlorococcus marinus (strain SARG / CCMP1375 / SS120)).